A 304-amino-acid polypeptide reads, in one-letter code: Mycothiol acetyltransferase (304 aa).

N-acetyltransferase domains lie at 16-155 (AHVE…RTGL) and 164-304 (VALS…YRRA). Position 46 (E46) interacts with 1D-myo-inositol 2-(L-cysteinylamino)-2-deoxy-alpha-D-glucopyranoside. 87-89 (LVV) contacts acetyl-CoA. 1D-myo-inositol 2-(L-cysteinylamino)-2-deoxy-alpha-D-glucopyranoside contacts are provided by E190, K230, and E237. Acetyl-CoA is bound by residues 241–243 (LGV) and 248–254 (AARGLGS). Y275 is a binding site for 1D-myo-inositol 2-(L-cysteinylamino)-2-deoxy-alpha-D-glucopyranoside.

The protein belongs to the acetyltransferase family. MshD subfamily. As to quaternary structure, monomer.

It catalyses the reaction 1D-myo-inositol 2-(L-cysteinylamino)-2-deoxy-alpha-D-glucopyranoside + acetyl-CoA = mycothiol + CoA + H(+). Catalyzes the transfer of acetyl from acetyl-CoA to desacetylmycothiol (Cys-GlcN-Ins) to form mycothiol. This is Mycothiol acetyltransferase from Clavibacter sepedonicus (Clavibacter michiganensis subsp. sepedonicus).